The following is a 128-amino-acid chain: Sulfurtransferase TusD (128 aa).

C78 acts as the Cysteine persulfide intermediate in catalysis.

Belongs to the DsrE/TusD family. Heterohexamer, formed by a dimer of trimers. The hexameric TusBCD complex contains 2 copies each of TusB, TusC and TusD. The TusBCD complex interacts with TusE.

Its subcellular location is the cytoplasm. Its function is as follows. Part of a sulfur-relay system required for 2-thiolation of 5-methylaminomethyl-2-thiouridine (mnm(5)s(2)U) at tRNA wobble positions. Accepts sulfur from TusA and transfers it in turn to TusE. This is Sulfurtransferase TusD from Shigella flexneri serotype 5b (strain 8401).